A 701-amino-acid polypeptide reads, in one-letter code: DNA ligase (701 aa).

NAD(+)-binding positions include 50 to 54 (DYEYD), 99 to 100 (SL), and Glu130. The active-site N6-AMP-lysine intermediate is the Lys132. 4 residues coordinate NAD(+): Arg153, Glu187, Lys301, and Lys325. Zn(2+) is bound by residues Cys419, Cys422, Cys437, and Cys442. A BRCT domain is found at 626-701 (NEHQKYMNKT…EIITEPFWDN (76 aa)).

Belongs to the NAD-dependent DNA ligase family. LigA subfamily. It depends on Mg(2+) as a cofactor. Requires Mn(2+) as cofactor.

The enzyme catalyses NAD(+) + (deoxyribonucleotide)n-3'-hydroxyl + 5'-phospho-(deoxyribonucleotide)m = (deoxyribonucleotide)n+m + AMP + beta-nicotinamide D-nucleotide.. In terms of biological role, DNA ligase that catalyzes the formation of phosphodiester linkages between 5'-phosphoryl and 3'-hydroxyl groups in double-stranded DNA using NAD as a coenzyme and as the energy source for the reaction. It is essential for DNA replication and repair of damaged DNA. The chain is DNA ligase from Malacoplasma penetrans (strain HF-2) (Mycoplasma penetrans).